The following is a 614-amino-acid chain: Serine/threonine-protein kinase-like protein E (614 aa).

In terms of domain architecture, Protein kinase spans 15 to 404; it reads YLIQLHLGQN…NPNTNGAPLS (390 aa). 21–29 lines the ATP pocket; sequence LGQNSLGQQ. Residues 256–269 show a composition bias toward polar residues; sequence PEQTDNGVGKSSTG. The interval 256–284 is disordered; it reads PEQTDNGVGKSSTGEPPFPTVHQSPESSS.

Belongs to the protein kinase superfamily. Ser/Thr protein kinase family.

In terms of biological role, lacks protein kinase activity. The polypeptide is Serine/threonine-protein kinase-like protein E (spkE) (Synechocystis sp. (strain ATCC 27184 / PCC 6803 / Kazusa)).